Here is a 374-residue protein sequence, read N- to C-terminus: Small ribosomal subunit protein uS4m (374 aa).

The region spanning 259–323 is the S4 RNA-binding domain; the sequence is GRLENFLMRL…KKLYFFIKSK (65 aa).

The protein belongs to the universal ribosomal protein uS4 family.

It is found in the mitochondrion. In Acanthamoeba castellanii (Amoeba), this protein is Small ribosomal subunit protein uS4m (RPS4).